The primary structure comprises 95 residues: Small ribosomal subunit protein bS6 (95 aa).

This sequence belongs to the bacterial ribosomal protein bS6 family.

Functionally, binds together with bS18 to 16S ribosomal RNA. In Symbiobacterium thermophilum (strain DSM 24528 / JCM 14929 / IAM 14863 / T), this protein is Small ribosomal subunit protein bS6.